Here is a 447-residue protein sequence, read N- to C-terminus: Aladin (447 aa).

The tract at residues Ser49–Glu69 is disordered. WD repeat units lie at residues Leu97–Ile138, Asp142–Leu181, Gln210–Ile250, and Arg252–Trp291.

Part of the nuclear pore complex (NPC). The NPC has an eight-fold symmetrical structure comprising a central transport channel and two rings, the cytoplasmic and nuclear rings, to which eight filaments are attached. The cytoplasmic filaments have loose ends, while the nuclear filaments are joined in a distal ring, forming a nuclear basket. NPCs are highly dynamic in configuration and composition, and can be devided in 3 subcomplexes, the NUP62 subcomplex, the NUP107-160 subcomplex and the NUP93 subcomplex, containing approximately 30 different nucleoporin proteins.

It localises to the nucleus envelope. It is found in the nucleus. The protein resides in the nuclear pore complex. This Arabidopsis thaliana (Mouse-ear cress) protein is Aladin.